Consider the following 325-residue polypeptide: Porphobilinogen deaminase (325 aa).

Residue C253 is modified to S-(dipyrrolylmethanemethyl)cysteine.

This sequence belongs to the HMBS family. Requires dipyrromethane as cofactor.

The enzyme catalyses 4 porphobilinogen + H2O = hydroxymethylbilane + 4 NH4(+). The protein operates within porphyrin-containing compound metabolism; protoporphyrin-IX biosynthesis; coproporphyrinogen-III from 5-aminolevulinate: step 2/4. In terms of biological role, tetrapolymerization of the monopyrrole PBG into the hydroxymethylbilane pre-uroporphyrinogen in several discrete steps. This Dictyostelium discoideum (Social amoeba) protein is Porphobilinogen deaminase (hemC).